The following is a 243-amino-acid chain: Alanyl-tRNA editing protein AlaX-M (243 aa).

Positions 105, 109, 208, and 212 each coordinate Zn(2+).

The protein belongs to the class-II aminoacyl-tRNA synthetase family. Editing domain AlaX-M subfamily. Zn(2+) is required as a cofactor.

The protein localises to the cytoplasm. Functionally, functions in trans to edit the amino acid moiety from incorrectly charged Ser-tRNA(Ala) or Gly-tRNA(Ala). Has no activity on incorrectly charged Ser-tRNA(Thr), nor on correctly charged Ala-tRNA(Ala) or Ser-tRNA(Ser). In Methanosarcina barkeri (strain Fusaro / DSM 804), this protein is Alanyl-tRNA editing protein AlaX-M (alaXM).